A 78-amino-acid chain; its full sequence is TP53-regulated inhibitor of apoptosis 1 (78 aa).

Residues 1–52 (MNSVGEECTDMKREYDQCFNRWFAEKFLKGECSGDPCTELFRRYRDCVQKAI) are a coiled coil. A CHCH domain is found at 5–55 (GEECTDMKREYDQCFNRWFAEKFLKGECSGDPCTELFRRYRDCVQKAIKDK). 2 consecutive short sequence motifs (cx9C motif) follow at residues 8 to 18 (CTDMKREYDQC) and 37 to 47 (CTELFRRYRDC). Disulfide bonds link Cys-8-Cys-47 and Cys-18-Cys-37.

This sequence belongs to the TRIAP1/MDM35 family. As to quaternary structure, monomer. Forms a complex with prelid1 in the mitochondrion intermembrane space. Interacts with prelid3a. In terms of tissue distribution, expressed in the developing pronephros.

It is found in the mitochondrion. It localises to the mitochondrion intermembrane space. The enzyme catalyses a 1,2-diacyl-sn-glycero-3-phosphate(in) = a 1,2-diacyl-sn-glycero-3-phosphate(out). Its function is as follows. Involved in the modulation of the mitochondrial apoptotic pathway by ensuring the accumulation of cardiolipin (CL) in mitochondrial membranes. The triap1:prelid1 complex probably functions as a phosphatidic acid (PA) transporter across the mitochondrion intermembrane space to provide PA for cardiolipin CL synthesis in the inner membrane. Likewise, the triap1:prelid3a complex mediates the transfer of phosphatidic acid (PA) between liposomes (in vitro) and probably functions as a PA transporter across the mitochondrion intermembrane space (in vivo). Mediates cell survival by inhibiting activation of caspase-9 which prevents induction of apoptosis. Required for pronephros development; probably involved at an early stage in the formation of pronephric components derived from the somatic layer. The sequence is that of TP53-regulated inhibitor of apoptosis 1 from Xenopus tropicalis (Western clawed frog).